Reading from the N-terminus, the 424-residue chain is CinA-like protein (424 aa).

Belongs to the CinA family.

The chain is CinA-like protein from Syntrophobacter fumaroxidans (strain DSM 10017 / MPOB).